The primary structure comprises 632 residues: MAESKVEHLLDSIHFPEDLRHLSQDKLEQVCADLRQYIIDVLSENPGHLGASLGTVELTVALHYVFNTPYDRIVWDVGHQAYGHKILTGRKDIFHTLRKFKGISGFPNPAESEYDAFIAGHASNSISAAMGMSVASALKKELDRHVIAVIGDGAMTGGLAFEGLNNASANPNNLLIILNDNDMAIDHSVGGLSQYLVDITTSQAYNKMRYDVYRGLKKIKLINNDRRENILRFNNSLKALLTQQHNLFEGFSIRYFGPVDGHDVNYLVKVLNDIKDMQGPKLLHIKTKKGKGFKPAEESATEWHAPGKFNKETGQRIIVRKLDEPQLYQDVFGHTLVELAENDERIVGVTPAMPSGCSMTYMMKAFPDRAFDVGIAEGHSVTFSAGLAKEGMIPFCNVYSSFMQRAYDMVIHDVALQKLHMVICLDRAGLVGEDGATHHGVFDLAYLRPIPNLVIASPLNELDLRNLMYTGYAAFDGPFVIRYPRGKGEMKDWRNEMQVLPIGKGKKLRDGDDIAVLSIGPIGNEVIKAIEMVKEERVSIAHYDMIYLKPLDEELLHEIGQKYNRIITVENGVIKGGFGSAVLEFMADNGYTPHVKRIGVPDAFIEHGSIPELYQLCGMDAESIAKQLKKEN.

Residues His-79 and 120-122 (GHA) each bind thiamine diphosphate. Asp-152 is a Mg(2+) binding site. Thiamine diphosphate-binding positions include 153 to 154 (GA), Asn-181, Phe-293, and Glu-377. Asn-181 is a Mg(2+) binding site.

It belongs to the transketolase family. DXPS subfamily. Homodimer. Mg(2+) is required as a cofactor. It depends on thiamine diphosphate as a cofactor.

The enzyme catalyses D-glyceraldehyde 3-phosphate + pyruvate + H(+) = 1-deoxy-D-xylulose 5-phosphate + CO2. Its pathway is metabolic intermediate biosynthesis; 1-deoxy-D-xylulose 5-phosphate biosynthesis; 1-deoxy-D-xylulose 5-phosphate from D-glyceraldehyde 3-phosphate and pyruvate: step 1/1. In terms of biological role, catalyzes the acyloin condensation reaction between C atoms 2 and 3 of pyruvate and glyceraldehyde 3-phosphate to yield 1-deoxy-D-xylulose-5-phosphate (DXP). This Parabacteroides distasonis (strain ATCC 8503 / DSM 20701 / CIP 104284 / JCM 5825 / NCTC 11152) protein is 1-deoxy-D-xylulose-5-phosphate synthase.